We begin with the raw amino-acid sequence, 211 residues long: Cytochrome c biogenesis ATP-binding export protein CcmA 2 (211 aa).

One can recognise an ABC transporter domain in the interval 6–208 (LEARELGVRR…GAVLDLATDA (203 aa)). 38 to 45 (GPNGAGKT) provides a ligand contact to ATP.

It belongs to the ABC transporter superfamily. CcmA exporter (TC 3.A.1.107) family. The complex is composed of two ATP-binding proteins (CcmA) and two transmembrane proteins (CcmB).

Its subcellular location is the cell inner membrane. The catalysed reaction is heme b(in) + ATP + H2O = heme b(out) + ADP + phosphate + H(+). Part of the ABC transporter complex CcmAB involved in the biogenesis of c-type cytochromes; once thought to export heme, this seems not to be the case, but its exact role is uncertain. Responsible for energy coupling to the transport system. This chain is Cytochrome c biogenesis ATP-binding export protein CcmA 2, found in Cupriavidus metallidurans (strain ATCC 43123 / DSM 2839 / NBRC 102507 / CH34) (Ralstonia metallidurans).